Here is a 119-residue protein sequence, read N- to C-terminus: Large ribosomal subunit protein bL17 (119 aa).

It belongs to the bacterial ribosomal protein bL17 family. In terms of assembly, part of the 50S ribosomal subunit. Contacts protein L32.

This is Large ribosomal subunit protein bL17 from Acholeplasma laidlawii (strain PG-8A).